Reading from the N-terminus, the 420-residue chain is Fasciclin-like arabinogalactan protein 8 (420 aa).

An N-terminal signal peptide occupies residues 1–25 (MAASQTFSLLAFTFSLLAFASTVSS). FAS1 domains lie at 26–172 (HNIT…DAPI) and 186–326 (SLSN…DNVL). 5 N-linked (GlcNAc...) asparagine glycosylation sites follow: Asn27, Asn128, Asn162, Asn189, and Asn273. Residues 335 to 394 (SKSPSPAPAPEPVTAPTPSPADAPSPTAASPPAPPTDESPESAPSDSPTGSANSKSANAA) form a disordered region. The segment covering 339–371 (SPAPAPEPVTAPTPSPADAPSPTAASPPAPPTD) has biased composition (pro residues). Asn392 carries the GPI-anchor amidated asparagine lipid modification. The propeptide at 393–420 (AAVGVSTPSLFTALVTIAAIAVSVSLCS) is removed in mature form.

It belongs to the fasciclin-like AGP family. In terms of tissue distribution, expressed mainly in flowers and to a lesser extent in leaves and roots.

It is found in the cell membrane. Its function is as follows. May be a cell surface adhesion protein. This is Fasciclin-like arabinogalactan protein 8 (FLA8) from Arabidopsis thaliana (Mouse-ear cress).